Reading from the N-terminus, the 124-residue chain is Predicted GPI-anchored protein 11 (124 aa).

An N-terminal signal peptide occupies residues 1-18 (MKFQFVTALALASTMAVA). The interval 38–59 (REGGSTGAELQDNNQPTAGLFG) is disordered. Residue Ser-107 is the site of GPI-anchor amidated serine attachment. A propeptide spans 108–124 (GAAGGVGNLFSGILGGL) (removed in mature form).

The protein resides in the cell membrane. This chain is Predicted GPI-anchored protein 11 (PGA11), found in Candida albicans (strain SC5314 / ATCC MYA-2876) (Yeast).